Consider the following 394-residue polypeptide: NAD(P)H-quinone oxidoreductase subunit H (394 aa).

The protein belongs to the complex I 49 kDa subunit family. In terms of assembly, NDH-1 can be composed of about 15 different subunits; different subcomplexes with different compositions have been identified which probably have different functions.

The protein localises to the cellular thylakoid membrane. The enzyme catalyses a plastoquinone + NADH + (n+1) H(+)(in) = a plastoquinol + NAD(+) + n H(+)(out). It catalyses the reaction a plastoquinone + NADPH + (n+1) H(+)(in) = a plastoquinol + NADP(+) + n H(+)(out). Its function is as follows. NDH-1 shuttles electrons from an unknown electron donor, via FMN and iron-sulfur (Fe-S) centers, to quinones in the respiratory and/or the photosynthetic chain. The immediate electron acceptor for the enzyme in this species is believed to be plastoquinone. Couples the redox reaction to proton translocation, and thus conserves the redox energy in a proton gradient. Cyanobacterial NDH-1 also plays a role in inorganic carbon-concentration. This is NAD(P)H-quinone oxidoreductase subunit H from Nostoc punctiforme (strain ATCC 29133 / PCC 73102).